The primary structure comprises 109 residues: Cyclic di-AMP receptor A (109 aa).

Positions 21, 25, 28, 35, 36, 37, 41, 47, 92, and 94 each coordinate 3',3'-c-di-AMP.

Homotrimer.

The protein resides in the cytoplasm. Its function is as follows. Binds cyclic di-AMP (c-di-AMP) and is probably involved in c-di-AMP-mediated signaling pathways. In vitro, can also bind cyclic GMP-AMP (3'3'-cGAMP), with lower affinity, but not c-di-GMP or 2'3'-cGAMP. This is Cyclic di-AMP receptor A from Bacillus subtilis (strain 168).